We begin with the raw amino-acid sequence, 417 residues long: Glucose-1-phosphatase (417 aa).

An N-terminal signal peptide occupies residues M1–A23. R41 serves as a coordination point for substrate. The active-site Nucleophile is the H42. Positions 45, 118, and 220 each coordinate substrate. The active-site Proton donor is the D315.

The protein belongs to the histidine acid phosphatase family. Homodimer.

It is found in the periplasm. The enzyme catalyses alpha-D-glucose 1-phosphate + H2O = D-glucose + phosphate. The sequence is that of Glucose-1-phosphatase (agp) from Providencia rettgeri.